The following is a 209-amino-acid chain: Imidazole glycerol phosphate synthase subunit HisH (209 aa).

The Glutamine amidotransferase type-1 domain occupies 1 to 205 (MIAIIDYGMG…KGVVETWKSS (205 aa)). The active-site Nucleophile is Cys-79. Active-site residues include His-180 and Glu-182.

In terms of assembly, heterodimer of HisH and HisF.

It is found in the cytoplasm. It carries out the reaction 5-[(5-phospho-1-deoxy-D-ribulos-1-ylimino)methylamino]-1-(5-phospho-beta-D-ribosyl)imidazole-4-carboxamide + L-glutamine = D-erythro-1-(imidazol-4-yl)glycerol 3-phosphate + 5-amino-1-(5-phospho-beta-D-ribosyl)imidazole-4-carboxamide + L-glutamate + H(+). It catalyses the reaction L-glutamine + H2O = L-glutamate + NH4(+). It participates in amino-acid biosynthesis; L-histidine biosynthesis; L-histidine from 5-phospho-alpha-D-ribose 1-diphosphate: step 5/9. IGPS catalyzes the conversion of PRFAR and glutamine to IGP, AICAR and glutamate. The HisH subunit catalyzes the hydrolysis of glutamine to glutamate and ammonia as part of the synthesis of IGP and AICAR. The resulting ammonia molecule is channeled to the active site of HisF. In Bacillus anthracis (strain CDC 684 / NRRL 3495), this protein is Imidazole glycerol phosphate synthase subunit HisH.